Here is a 199-residue protein sequence, read N- to C-terminus: Ribosome biogenesis protein RLP24 (199 aa).

The interval 147–182 (KEQERAESVSEQEESEEEEEDMEIDSDEEEEEQLEK) is disordered. Residues 156-179 (SEQEESEEEEEDMEIDSDEEEEEQ) show a composition bias toward acidic residues. Residue serine 172 is modified to Phosphoserine.

It belongs to the eukaryotic ribosomal protein eL24 family. Associated with nucleolar and cytoplasmic pre-60S particles. At the end of biogenesis it dissociates from cytoplasmic pre-60S particles and is likely to be exchanged for its ribosomal homolog, RPL24. Interacts (via C-terminus) with AFG2 (hexameric form); the interaction is direct, recruits AFG2 to pre-60S ribosomal particles and promotes AFG2 ATPase activity and RLP24 release from pre-60S ribosomal particles. Interacts with NOG1; the interaction is direct.

It localises to the cytoplasm. Its subcellular location is the nucleus. Its function is as follows. Involved in the biogenesis of the 60S ribosomal subunit. Ensures the docking of NOG1 to pre-60S ribosomal particles. Activates and recruits ATPase AFG2 to cytoplasmic pre-60S ribosomal particles. This is Ribosome biogenesis protein RLP24 (RLP24) from Saccharomyces cerevisiae (strain ATCC 204508 / S288c) (Baker's yeast).